A 906-amino-acid chain; its full sequence is Protein translocase subunit SecA (906 aa).

ATP contacts are provided by residues Gln-87, 105 to 109, and Asp-507; that span reads GEGKT. The span at 553–563 shows a compositional bias: basic and acidic residues; that stretch reads RHESRRIDNQL. Disordered regions lie at residues 553-576 and 854-906; these read RHES…PGSS and LEEP…GRLA. Zn(2+) is bound by residues Cys-890, Cys-892, Cys-901, and His-902. Residues 896-906 are compositionally biased toward basic residues; the sequence is KKYKQCHGRLA.

This sequence belongs to the SecA family. In terms of assembly, monomer and homodimer. Part of the essential Sec protein translocation apparatus which comprises SecA, SecYEG and auxiliary proteins SecDF-YajC and YidC. Requires Zn(2+) as cofactor.

The protein resides in the cell inner membrane. Its subcellular location is the cytoplasm. It carries out the reaction ATP + H2O + cellular proteinSide 1 = ADP + phosphate + cellular proteinSide 2.. In terms of biological role, part of the Sec protein translocase complex. Interacts with the SecYEG preprotein conducting channel. Has a central role in coupling the hydrolysis of ATP to the transfer of proteins into and across the cell membrane, serving both as a receptor for the preprotein-SecB complex and as an ATP-driven molecular motor driving the stepwise translocation of polypeptide chains across the membrane. This Methylococcus capsulatus (strain ATCC 33009 / NCIMB 11132 / Bath) protein is Protein translocase subunit SecA.